Here is a 234-residue protein sequence, read N- to C-terminus: 2-amino-5-formylamino-6-ribosylaminopyrimidin-4(3H)-one 5'-monophosphate deformylase (234 aa).

Fe cation is bound by residues E30, H32, D41, and H111.

Belongs to the creatininase superfamily. FAPy deformylase family. Homodimer. Fe(2+) serves as cofactor. Zn(2+) is required as a cofactor.

It carries out the reaction 2-amino-5-formylamino-6-(5-phospho-D-ribosylamino)pyrimidin-4(3H)-one + H2O = 2,5-diamino-6-(1-D-ribosylamino)pyrimidin-4(3H)-one 5'-phosphate + formate + H(+). It functions in the pathway cofactor biosynthesis; coenzyme F420 biosynthesis. Its pathway is cofactor biosynthesis; riboflavin biosynthesis. Its function is as follows. Catalyzes the hydrolysis of the formamide of 2-amino-5-formylamino-6-ribosylamino-4(3H)-pyrimidinone 5'-monophosphate (FAPy) to form 2,5-diamino-6-ribosylamino-4(3H)-pyrimidinone 5'-phosphate (APy). The sequence is that of 2-amino-5-formylamino-6-ribosylaminopyrimidin-4(3H)-one 5'-monophosphate deformylase from Methanothermobacter thermautotrophicus (strain ATCC 29096 / DSM 1053 / JCM 10044 / NBRC 100330 / Delta H) (Methanobacterium thermoautotrophicum).